The primary structure comprises 172 residues: Disulfide bond formation protein B (172 aa).

Topologically, residues 1–11 (MNPFRWSFRAQ) are cytoplasmic. A helical transmembrane segment spans residues 12 to 28 (FLLGFLACAGLLAYAIY). Residues 29 to 46 (VQLHLGLEPCPLCIFQRI) are Periplasmic-facing. A disulfide bond links cysteine 38 and cysteine 41. A helical membrane pass occupies residues 47-63 (AFAALAMFFLLGALHGP). Over 64–70 (RAAAGRK) the chain is Cytoplasmic. A helical membrane pass occupies residues 71-88 (VYGVLSFIAAGVGMGIAA). Residues 89 to 145 (RHVWVQIRPKDMMSSCGPPLSFLSETMGPFEVFRTVLTGTGDCGNIDWRFLGLSMPM) are Periplasmic-facing. Cysteine 104 and cysteine 131 are oxidised to a cystine. Residues 146-164 (WSMVWFVGLALWALYAGFK) traverse the membrane as a helical segment. Over 165–172 (ARRSSVHH) the chain is Cytoplasmic.

This sequence belongs to the DsbB family.

Its subcellular location is the cell inner membrane. Its function is as follows. Required for disulfide bond formation in some periplasmic proteins. Acts by oxidizing the DsbA protein. In Xanthomonas euvesicatoria pv. vesicatoria (strain 85-10) (Xanthomonas campestris pv. vesicatoria), this protein is Disulfide bond formation protein B.